We begin with the raw amino-acid sequence, 401 residues long: Acetate kinase (401 aa).

Asn7 is a binding site for Mg(2+). Residue Lys14 participates in ATP binding. Arg91 contacts substrate. Residue Asp148 is the Proton donor/acceptor of the active site. ATP is bound by residues 208 to 212, 283 to 285, and 332 to 336; these read HLGNG, DFR, and GVGEN. Position 385 (Glu385) interacts with Mg(2+).

It belongs to the acetokinase family. Homodimer. Requires Mg(2+) as cofactor. The cofactor is Mn(2+).

It is found in the cytoplasm. It carries out the reaction acetate + ATP = acetyl phosphate + ADP. Its pathway is metabolic intermediate biosynthesis; acetyl-CoA biosynthesis; acetyl-CoA from acetate: step 1/2. Its function is as follows. Catalyzes the formation of acetyl phosphate from acetate and ATP. Can also catalyze the reverse reaction. In Caldanaerobacter subterraneus subsp. tengcongensis (strain DSM 15242 / JCM 11007 / NBRC 100824 / MB4) (Thermoanaerobacter tengcongensis), this protein is Acetate kinase.